The following is a 117-amino-acid chain: Urease subunit beta (117 aa).

The tract at residues 95-117 is disordered; that stretch reads NAVNGKLDGGPHPGVPATERGAK.

This sequence belongs to the urease beta subunit family. As to quaternary structure, heterotrimer of UreA (gamma), UreB (beta) and UreC (alpha) subunits. Three heterotrimers associate to form the active enzyme.

It is found in the cytoplasm. The enzyme catalyses urea + 2 H2O + H(+) = hydrogencarbonate + 2 NH4(+). It functions in the pathway nitrogen metabolism; urea degradation; CO(2) and NH(3) from urea (urease route): step 1/1. This is Urease subunit beta from Pseudarthrobacter chlorophenolicus (strain ATCC 700700 / DSM 12829 / CIP 107037 / JCM 12360 / KCTC 9906 / NCIMB 13794 / A6) (Arthrobacter chlorophenolicus).